The sequence spans 404 residues: Protein translocase subunit SecF (404 aa).

A run of 6 helical transmembrane segments spans residues 15-35 (KWYF…SMGA), 225-245 (LLAT…RFEL), 246-266 (IYGI…VGAF), 275-295 (LTVV…TIVV), 327-347 (ILTS…GGEV), and 355-375 (LVIG…PMLV).

This sequence belongs to the SecD/SecF family. SecF subfamily. In terms of assembly, forms a complex with SecD. Part of the essential Sec protein translocation apparatus which comprises SecA, SecYEG and auxiliary proteins SecDF. Other proteins may also be involved.

Its subcellular location is the cell inner membrane. Part of the Sec protein translocase complex. Interacts with the SecYEG preprotein conducting channel. SecDF uses the proton motive force (PMF) to complete protein translocation after the ATP-dependent function of SecA. This chain is Protein translocase subunit SecF, found in Koribacter versatilis (strain Ellin345).